The primary structure comprises 206 residues: Small ribosomal subunit protein uS4 (206 aa).

An S4 RNA-binding domain is found at 94–157; sequence RRLDNVVYRL…RSRTYFKNLV (64 aa).

Belongs to the universal ribosomal protein uS4 family. As to quaternary structure, part of the 30S ribosomal subunit. Contacts protein S5. The interaction surface between S4 and S5 is involved in control of translational fidelity.

Functionally, one of the primary rRNA binding proteins, it binds directly to 16S rRNA where it nucleates assembly of the body of the 30S subunit. With S5 and S12 plays an important role in translational accuracy. The polypeptide is Small ribosomal subunit protein uS4 (Chloroflexus aurantiacus (strain ATCC 29364 / DSM 637 / Y-400-fl)).